The primary structure comprises 229 residues: Non-structural protein P8 (229 aa).

The next 2 membrane-spanning stretches (helical) occupy residues 119 to 139 and 162 to 182; these read IIHM…VCTL and SLNP…MVCA.

The protein belongs to the orbivirus NS3 family. As to quaternary structure, forms homooligomers via coiled-coil motif. Interacts with host OPTN; this interaction inhibits innate immune response.

It localises to the host cell membrane. The protein localises to the host Golgi apparatus. Functionally, plays a role in the inhibition of host innate immune response. Interacts with host OPTN and thus inhibits the recruitment of TBK1 to the host Golgi apparatus. In turn, downstream partner IRF3 cannot be activated and IFN-beta production is impaired. Facilitates viral particle release either by increasing plasma membrane permeability through a viroporin-like activity or by viral budding. The sequence is that of Non-structural protein P8 (Segment-10) from Bluetongue virus 1 (isolate Australia) (BTV 1).